A 381-amino-acid polypeptide reads, in one-letter code: Chaperone protein DnaJ (381 aa).

The J domain occupies 3-66 (DYYETLGVER…DKRRMYDSGV (64 aa)). The CR-type zinc-finger motif lies at 129-211 (GGTAHVKINT…CMGHGRVRTT (83 aa)). Zn(2+) is bound by residues C142, C145, C159, C162, C185, C188, C199, and C202. 4 CXXCXGXG motif repeats span residues 142–149 (CQECGGSG), 159–166 (CPDCHGQG), 185–192 (CERCEGHG), and 199–206 (CPSCMGHG). The disordered stretch occupies residues 355-381 (ATHVSQASRPQAGQKKGFFSKLKDALS). The segment covering 356–365 (THVSQASRPQ) has biased composition (polar residues).

Belongs to the DnaJ family. Homodimer. Zn(2+) is required as a cofactor.

It localises to the cytoplasm. In terms of biological role, participates actively in the response to hyperosmotic and heat shock by preventing the aggregation of stress-denatured proteins and by disaggregating proteins, also in an autonomous, DnaK-independent fashion. Unfolded proteins bind initially to DnaJ; upon interaction with the DnaJ-bound protein, DnaK hydrolyzes its bound ATP, resulting in the formation of a stable complex. GrpE releases ADP from DnaK; ATP binding to DnaK triggers the release of the substrate protein, thus completing the reaction cycle. Several rounds of ATP-dependent interactions between DnaJ, DnaK and GrpE are required for fully efficient folding. Also involved, together with DnaK and GrpE, in the DNA replication of plasmids through activation of initiation proteins. This Bifidobacterium longum (strain NCC 2705) protein is Chaperone protein DnaJ.